We begin with the raw amino-acid sequence, 387 residues long: MNSLQVLTKKVLIENKAFSNYHEDDSFILQQLGLWWENGPIGFCKQCKMVTGGSMLCSDVDSYELDRALVKAVKENQTDLIKLFVLWGAEINFGIVCAKTKKMKDLCIQLGADPKFLDEGLYNMFVYLVKQKKVLLAIDIYYDNILILDSFDSHDFHMLIDFMYNRFILNLDEKEEMTRNTLVLKFWYKFAIDFNLIKPIRYLSKKFPHLDDWRLKTAIYLGNVDEIHHAYFQENIRLDPNHMMSFACIHPWNKLGIYYCFALGADIDNALDILLRFDETNKEINRETGRGISLYIEWGYLSNVYFCIGLGANPYIKKIQDTIKQKNSNIMILLFSRKKRILSPHSVLQNKILDPTDVRKMILTHENTENFYPFSELAVRLIQQANI.

It belongs to the asfivirus MGF 360 family.

Plays a role in virus cell tropism, and may be required for efficient virus replication in macrophages. The polypeptide is Protein MGF 360-4L (Ornithodoros (relapsing fever ticks)).